Consider the following 224-residue polypeptide: Adenylate kinase (224 aa).

10–15 (GSGKGT) serves as a coordination point for ATP. The NMP stretch occupies residues 30 to 59 (ESGAIFRDNIKGGTDLGMKAKAYIDKGDLV). AMP contacts are provided by residues S31, R36, 57–59 (DLV), 85–88 (GFPR), and Q92. Residues 126–165 (GRRLCENDNNHPNNIFIDAIKPNGDKCRVCGGALSSRADD) form an LID region. Residue R127 coordinates ATP. The AMP site is built by R162 and R174. Position 211 (N211) interacts with ATP.

Belongs to the adenylate kinase family. As to quaternary structure, monomer.

The protein localises to the cytoplasm. The catalysed reaction is AMP + ATP = 2 ADP. Its pathway is purine metabolism; AMP biosynthesis via salvage pathway; AMP from ADP: step 1/1. Its function is as follows. Catalyzes the reversible transfer of the terminal phosphate group between ATP and AMP. Plays an important role in cellular energy homeostasis and in adenine nucleotide metabolism. The protein is Adenylate kinase of Desulforapulum autotrophicum (strain ATCC 43914 / DSM 3382 / VKM B-1955 / HRM2) (Desulfobacterium autotrophicum).